Here is a 402-residue protein sequence, read N- to C-terminus: MEQPGPITDIAKPGIKAPRDLAISLREEVARILGRSSIGFPGAQPVSFARKHLEELRREDYYVCEKSDGIRYLLYLTVDEEGQEVQYLIDRKNDYWFLPRNSMHFPMPNDIQAFHRGTIIDGELVMDTVPGTNGRKEPRFLVFDLLALDDKAELLNKPLDKRLGYFSAYIYEPYKKLLQQFPQEIPFMAFKVEMKRMELSYGIETMFREVIPALKHDSDGLIFTCRTTPYHFGTDPHILKWKAPHENTLDFRMRLNFPLVQATEAELDEGFPEQFTDYDSVPQAELYVFCGNDGPGGSKYELFPDPLYIAEDEWETLKALGDPLQDRVVECCLDAENRWRLFRFRDDKNEANHTSTVSSVMASIRDGVSDQELLSAATAIKESWKIRAQKRKEQQQQQQPKH.

Lys66 acts as the N6-GMP-lysine intermediate in catalysis.

The protein belongs to the eukaryotic GTase family. Heterodimer. The mRNA-capping enzyme is composed of two separate chains alpha and beta, respectively a mRNA guanylyltransferase and an mRNA 5'-triphosphate monophosphatase.

The protein resides in the nucleus. It catalyses the reaction a 5'-end diphospho-ribonucleoside in mRNA + GTP + H(+) = a 5'-end (5'-triphosphoguanosine)-ribonucleoside in mRNA + diphosphate. Its function is as follows. Second step of mRNA capping. Transfer of the GMP moiety of GTP to the 5'-end of RNA via an enzyme-GMP covalent reaction intermediate. The polypeptide is mRNA-capping enzyme subunit alpha (rnp-2) (Neurospora crassa (strain ATCC 24698 / 74-OR23-1A / CBS 708.71 / DSM 1257 / FGSC 987)).